A 2475-amino-acid polypeptide reads, in one-letter code: Non-reducing polyketide synthase prhL (2475 aa).

The interval 14 to 253 is N-terminal acylcarrier protein transacylase domain (SAT); the sequence is VLFGSKYSEI…HHADHLSAAQ (240 aa). In terms of domain architecture, Ketosynthase family 3 (KS3) spans 384–800; it reads SIPIAVTGLA…GSNAAIVLKE (417 aa). Catalysis depends on for beta-ketoacyl synthase activity residues C549, H684, and H723. The segment at 910 to 1212 is malonyl-CoA:ACP transacylase (MAT) domain; it reads LCFGGQTGNK…CPMDLSGPQA (303 aa). The For acyl/malonyl transferase activity role is filled by S997. Positions 1279–1407 are N-terminal hotdog fold; it reads EGLKLVQLLK…GTISLSPGAN (129 aa). The PKS/mFAS DH domain occupies 1279 to 1586; it reads EGLKLVQLLK…FTSVSIQSLR (308 aa). The product template (PT) domain stretch occupies residues 1282 to 1585; sequence KLVQLLKNEG…TFTSVSIQSL (304 aa). The active-site Proton acceptor; for dehydratase activity is H1312. Residues 1435-1586 form a C-terminal hotdog fold region; that stretch reads SSSGLKRSTV…FTSVSIQSLR (152 aa). Residue D1493 is the Proton donor; for dehydratase activity of the active site. Residues 1626 to 1703 form the Carrier domain; the sequence is SSNGDDLRTV…ALVQRIFPGR (78 aa). An O-(pantetheine 4'-phosphoryl)serine modification is found at S1663. Positions 1865–2098 are methyltransferase (CMeT) domain; it reads HHTSEHKLLH…GFNWVDWTDN (234 aa). Positions 2127–2475 are thioesterase (TE) domain; it reads SDIHEETVVY…YEFLRSHVRL (349 aa). Active-site for thioesterase activity residues include S2250 and D2412.

It carries out the reaction 3 malonyl-CoA + acetyl-CoA + 2 S-adenosyl-L-methionine = 3,5-dimethylorsellinate + 2 S-adenosyl-L-homocysteine + 3 CO2 + 4 CoA. It functions in the pathway secondary metabolite biosynthesis; terpenoid biosynthesis. Functionally, non-reducing polyketide synthase; part of the gene cluster that mediates the biosynthesis of paraherquonin, a meroterpenoid with a unique, highly congested hexacyclic molecular architecture. The first step of the pathway is the synthesis of 3,5-dimethylorsellinic acid (DMOA) by the polyketide synthase prhL. Synthesis of DMOA is followed by farnesylation by the prenyltransferase prhE, methylesterification by the methyl-transferase prhM, epoxidation of the prenyl chain by the flavin-dependent monooxygenase prhF, and cyclization of the farnesyl moiety by the terpene cyclase prhH, to yield the tetracyclic intermediate, protoaustinoid A. The short chain dehydrogenase prhI then oxidizes the C-3 alcohol group of the terpene cyclase product to transform protoaustinoid A into protoaustinoid B. The FAD-binding monooxygenase prhJ catalyzes the oxidation of protoaustinoid B into preaustinoid A which is further oxidized into preaustinoid A1 by FAD-binding monooxygenase phrK. Finally, prhA leads to berkeleydione via the berkeleyone B intermediate. PrhA is a multifunctional dioxygenase that first desaturates at C5-C6 to form berkeleyone B, followed by rearrangement of the A/B-ring to form the cycloheptadiene moiety in berkeleydione. Berkeleydione serves as the key intermediate for the biosynthesis of paraherquonin as well as many other meroterpenoids. The cytochrome P450 monooxygenases prhB, prhD, and prhN, as well as the isomerase prhC, are probably involved in the late stage of paraherquonin biosynthesis, after the production of berkeleydione. Especially prhC might be a multifunctional enzyme that catalyzes the D-ring expansion via intramolecular methoxy rearrangement, as well as the hydrolysis of the expanded D-ring. The protein is Non-reducing polyketide synthase prhL of Penicillium brasilianum.